We begin with the raw amino-acid sequence, 265 residues long: Ubiquinone biosynthesis protein COQ4 homolog, mitochondrial (265 aa).

The transit peptide at 1 to 30 (MATLLRPVLRRLCGLPGLQRPAAEMPLRAR) directs the protein to the mitochondrion. At Ser108 the chain carries Phosphoserine. Residues His163, Asp164, His167, and Glu179 each contribute to the Zn(2+) site.

This sequence belongs to the COQ4 family. Component of a multi-subunit COQ enzyme complex, composed of at least COQ3, COQ4, COQ5, COQ6, COQ7 and COQ9. Zn(2+) serves as cofactor. In terms of tissue distribution, expressed ubiquitously, but at high levels in liver, lung and pancreas.

It is found in the mitochondrion inner membrane. The catalysed reaction is 4-hydroxy-3-methoxy-5-(all-trans-decaprenyl)benzoate + H(+) = 2-methoxy-6-(all-trans-decaprenyl)phenol + CO2. It functions in the pathway cofactor biosynthesis; ubiquinone biosynthesis. Functionally, lyase that catalyzes the C1-decarboxylation of 4-hydroxy-3-methoxy-5-(all-trans-decaprenyl)benzoic acid into 2-methoxy-6-(all-trans-decaprenyl)phenol during ubiquinone biosynthesis. The chain is Ubiquinone biosynthesis protein COQ4 homolog, mitochondrial from Homo sapiens (Human).